The chain runs to 935 residues: Mannosyltransferase regulator 14 (935 aa).

The Cytoplasmic portion of the chain corresponds to 1–21 (MMLSLRRFSMYVLRSLRLHFK). Residues 22-42 (KIIITLLTIQLLFITIFVLGG) form a helical; Signal-anchor for type II membrane protein membrane-spanning segment. Topologically, residues 43 to 935 (RSSIIDGNWK…NNIFGSDQKY (893 aa)) are lumenal. Residues 498–500 (DHD) carry the DXD motif.

It belongs to the MNN4 family.

It localises to the golgi apparatus membrane. In terms of biological role, plays a role in N-glycan mannosylphosphorylation and has partially redundant function with MNN4. The chain is Mannosyltransferase regulator 14 from Saccharomyces cerevisiae (strain ATCC 204508 / S288c) (Baker's yeast).